The following is a 509-amino-acid chain: MEFSGRKWRKLRLAGDQRNASYPHCLQFYLQPPSENISLIEFENLAIDRVKLLKSVENLGVSYVKGTEQYQSKLESELRKLKFSYRENLEDEYEPRRRDHISHFILRLAYCQSEELRRWFIQQEMDLLRFRFSILPKDKIQDFLKDSQLQFEAISDEEKTLREQEIVASSPSLSGLKLGFESIYKIPFADALDLFRGRKVYLEDGFAYVPLKDIVAIILNEFRAKLSKALALTARSLPAVQSDERLQPLLNHLSHSYTGQDYSTQGNVGKISLDQIDLLSTKSFPPCMRQLHKALRENHHLRHGGRMQYGLFLKGIGLTLEQALQFWKQEFIKGKMDPDKFDKGYSYNIRHSFGKEGKRTDYTPFSCLKIILSNPPSQGDYHGCPFRHSDPELLKQKLQSYKISPGGISQILDLVKGTHYQVACQKYFEMIHNVDDCGFSLNHPNQFFCESQRILNGGKDIKKEPIQPETPQPKPSVQKTKDASSALASLNSSLEMDMEGLEDYFSEDS.

The interdomain linker stretch occupies residues 253-270 (LSHSYTGQDYSTQGNVGK). Positions 266-509 (GNVGKISLDQ…GLEDYFSEDS (244 aa)) are interacts with PRIM1. 4 residues coordinate [4Fe-4S] cluster: cysteine 287, cysteine 367, cysteine 384, and cysteine 424. The tract at residues 300–442 (HLRHGGRMQY…NVDDCGFSLN (143 aa)) is RNA:DNA duplex-binding. A disordered region spans residues 461–486 (IKKEPIQPETPQPKPSVQKTKDASSA). Threonine 470 is subject to Phosphothreonine.

It belongs to the eukaryotic-type primase large subunit family. Heterodimer of a catalytic subunit PRIM1 and a regulatory subunit PRIM2, also known as the DNA primase complex. Interacts via (C-terminus) with PRIM1. Component of the alpha DNA polymerase complex (also known as the alpha DNA polymerase-primase complex) consisting of four subunits: the catalytic subunit POLA1, the regulatory subunit POLA2, and the primase complex subunits PRIM1 and PRIM2 respectively. Within the complex, POLA1 directly interacts with PRIM2. The cofactor is [4Fe-4S] cluster.

Functionally, regulatory subunit of the DNA primase complex and component of the DNA polymerase alpha complex (also known as the alpha DNA polymerase-primase complex) which play an essential role in the initiation of DNA synthesis. During the S phase of the cell cycle, the DNA polymerase alpha complex (composed of a catalytic subunit POLA1, an accessory subunit POLA2 and two primase subunits, the catalytic subunit PRIM1 and the regulatory subunit PRIM2) is recruited to DNA at the replicative forks via direct interactions with MCM10 and WDHD1. The primase subunit of the polymerase alpha complex initiates DNA synthesis by oligomerising short RNA primers on both leading and lagging strands. These primers are initially extended by the polymerase alpha catalytic subunit and subsequently transferred to polymerase delta and polymerase epsilon for processive synthesis on the lagging and leading strand, respectively. In the primase complex, both subunits are necessary for the initial di-nucleotide formation, but the extension of the primer depends only on the catalytic subunit. Binds RNA:DNA duplex and coordinates the catalytic activities of PRIM1 and POLA2 during primase-to-polymerase switch. The sequence is that of DNA primase large subunit (PRIM2) from Homo sapiens (Human).